A 566-amino-acid polypeptide reads, in one-letter code: NAD-dependent malic enzyme (566 aa).

Residue Tyr104 is the Proton donor of the active site. NAD(+) is bound at residue Arg157. Lys175 functions as the Proton acceptor in the catalytic mechanism. Residues Glu246, Asp247, and Asp270 each coordinate a divalent metal cation. Residues Asp270 and Asn419 each coordinate NAD(+).

Belongs to the malic enzymes family. Homotetramer. It depends on Mg(2+) as a cofactor. Mn(2+) serves as cofactor.

The enzyme catalyses (S)-malate + NAD(+) = pyruvate + CO2 + NADH. It carries out the reaction oxaloacetate + H(+) = pyruvate + CO2. This is NAD-dependent malic enzyme from Cronobacter sakazakii (strain ATCC BAA-894) (Enterobacter sakazakii).